Here is a 609-residue protein sequence, read N- to C-terminus: Frizzled and smoothened-like protein E (609 aa).

A signal peptide spans 1-20; the sequence is MEMIRIFLIYLILKIIIING. Topologically, residues 21–259 are extracellular; sequence ENNEYSKGYG…QWKRVYDMAK (239 aa). An FZ domain is found at 35-192; the sequence is FPGSKCLNYV…GLYKVPCIDP (158 aa). Disulfide bonds link C40-C118, C53-C111, C100-C149, and C138-C189. 6 N-linked (GlcNAc...) asparagine glycosylation sites follow: N75, N130, N172, N198, N217, and N245. A helical membrane pass occupies residues 260–280; that stretch reads TLSSISFICACYNILTFGILN. Over 281 to 288 the chain is Cytoplasmic; the sequence is RKRKSKYN. A helical membrane pass occupies residues 289-309; sequence ICITLMSTSIALVYLTDIIKF. Residues 310–337 are Extracellular-facing; it reads GYGIEEFLCPEPGRSAVQNDAACGITGA. The helical transmembrane segment at 338 to 358 threads the bilayer; the sequence is MFHFGITYCCCWAMTMSIVLF. Residues 359 to 365 are Cytoplasmic-facing; that stretch reads CSVKRIK. A helical transmembrane segment spans residues 366–386; the sequence is LFYFRHFMIGNTIFTIITTVI. Topologically, residues 387–408 are extracellular; sequence LLSAKKMVAGTGYIECWVRERW. The helical transmembrane segment at 409-429 threads the bilayer; sequence FVITLFWLPCGIGLSIGIFCI. At 430 to 457 the chain is on the cytoplasmic side; that stretch reads GGVIHEIYNISKKVNIRESEFILRQIKP. Residues 458-478 traverse the membrane as a helical segment; sequence FSLVFSVAGSFLYLFIFFFDV. Residues 479–511 lie on the Extracellular side of the membrane; sequence ERKIDSYKAAVADYVLCLLSGGSEETCFTTGPN. Residues 512–532 form a helical membrane-spanning segment; it reads YASFFIFYFFIRVFGVLFFSI. Over 533–609 the chain is Cytoplasmic; sequence YGTSRVARDI…DSKSIELEKK (77 aa). Over residues 559–570 the composition is skewed to polar residues; sequence ESGISRNNSRTD. Residues 559–609 form a disordered region; the sequence is ESGISRNNSRTDISFGKNNNSKNSNNSKNSNNSKNSNNSDNDSKSIELEKK. Residues 575 to 598 show a composition bias toward low complexity; the sequence is KNNNSKNSNNSKNSNNSKNSNNSD. The segment covering 599–609 has biased composition (basic and acidic residues); the sequence is NDSKSIELEKK.

It belongs to the G-protein coupled receptor Fz/Smo family.

The protein localises to the membrane. The polypeptide is Frizzled and smoothened-like protein E (fslE) (Dictyostelium discoideum (Social amoeba)).